The chain runs to 133 residues: MEPISHLVKSSLPNYLSSLPIPDSIGGWFKLSFKDWLALIPPTVVVAGLGYTAYLAYCPAAQGSCSAKKSGRCNNLIRKNEPKVVDMIDVEDIAEKAAFCRCWKTKNWPYCDGSHGEHNKQTGDNVGPIVIKK.

Over 1-35 the chain is Lumenal; sequence MEPISHLVKSSLPNYLSSLPIPDSIGGWFKLSFKD. Residues 36 to 58 form a helical membrane-spanning segment; it reads WLALIPPTVVVAGLGYTAYLAYC. Residues 59–133 lie on the Cytoplasmic side of the membrane; it reads PAAQGSCSAK…DNVGPIVIKK (75 aa). The [2Fe-2S] cluster site is built by Cys-100, Cys-102, Cys-111, and His-115.

Belongs to the CISD protein family. CISD2 subfamily. [2Fe-2S] cluster serves as cofactor.

Its subcellular location is the endoplasmic reticulum membrane. The sequence is that of CDGSH iron-sulfur domain-containing protein 2 homolog from Drosophila erecta (Fruit fly).